Consider the following 986-residue polypeptide: Replication factor C subunit 1 (986 aa).

Residues 1-95 (MQRGIDSFFK…ALSKLKRHVD (95 aa)) are disordered. 6 positions are modified to phosphoserine: serine 18, serine 28, serine 40, serine 41, serine 48, and serine 58. At threonine 60 the chain carries Phosphothreonine. Phosphoserine is present on residues serine 62 and serine 63. Threonine 71 is subject to Phosphothreonine. Residues serine 128, serine 137, serine 149, serine 154, serine 156, serine 164, and serine 194 each carry the phosphoserine modification. A compositionally biased stretch (basic and acidic residues) spans 136 to 147 (ESIKEAAPEKKV). 2 disordered regions span residues 136–203 (ESIK…ERHE) and 317–388 (KQVK…NDVP). Threonine 197 bears the Phosphothreonine mark. Positions 232 to 322 (GSPDCLSGLT…SGIAKQVKEE (91 aa)) constitute a BRCT domain. 2 stretches are compositionally biased toward basic and acidic residues: residues 317–364 (KQVK…EKHD) and 370–385 (VKEEHTSPKETKDKLN). ATP is bound at residue 487–494 (GPPGIGKT). The interval 913-986 (SEAAGADDDY…ASKSKAKAKK (74 aa)) is disordered. Over residues 917–932 (GADDDYLDEGPGEEDG) the composition is skewed to acidic residues. Residues serine 938 and serine 939 each carry the phosphoserine modification. Residues 955-959 (KAKKR) carry the Nuclear localization signal motif. The span at 962–979 (TSKASGGSKKATSSTASK) shows a compositional bias: low complexity.

Belongs to the activator 1 large subunit family. As to quaternary structure, interacts with C-terminus of PCNA.

The protein resides in the nucleus. Its function is as follows. The elongation of primed DNA templates by DNA polymerase delta and epsilon requires the action of the accessory proteins proliferating cell nuclear antigen (PCNA) and activator 1. This subunit binds to the primer-template junction. This is Replication factor C subunit 1 (Gnf1) from Drosophila melanogaster (Fruit fly).